We begin with the raw amino-acid sequence, 1070 residues long: DNA-directed RNA polymerase subunit beta (1070 aa).

This sequence belongs to the RNA polymerase beta chain family. In plastids the minimal PEP RNA polymerase catalytic core is composed of four subunits: alpha, beta, beta', and beta''. When a (nuclear-encoded) sigma factor is associated with the core the holoenzyme is formed, which can initiate transcription.

It is found in the plastid. It localises to the chloroplast. It catalyses the reaction RNA(n) + a ribonucleoside 5'-triphosphate = RNA(n+1) + diphosphate. Its function is as follows. DNA-dependent RNA polymerase catalyzes the transcription of DNA into RNA using the four ribonucleoside triphosphates as substrates. This Cucumis sativus (Cucumber) protein is DNA-directed RNA polymerase subunit beta.